We begin with the raw amino-acid sequence, 149 residues long: Large ribosomal subunit protein bL9 (149 aa).

Belongs to the bacterial ribosomal protein bL9 family.

In terms of biological role, binds to the 23S rRNA. The chain is Large ribosomal subunit protein bL9 from Proteus mirabilis (strain HI4320).